Reading from the N-terminus, the 116-residue chain is MRHQCRVPQLGRPADQRKAMLRALTTQLIREGRVTTTKARAKALRDEAERMITLAKDGSLASRRRALGYIYDKQLVHALFDKAPDRYSDRKGGYTRITRTVPRRGDNAEMAIIELV.

The protein belongs to the bacterial ribosomal protein bL17 family. Part of the 50S ribosomal subunit. Contacts protein L32.

This Parasynechococcus marenigrum (strain WH8102) protein is Large ribosomal subunit protein bL17.